Reading from the N-terminus, the 430-residue chain is Serine--tRNA ligase (430 aa).

Position 231 to 233 (231 to 233) interacts with L-serine; the sequence is TSE. 262-264 serves as a coordination point for ATP; it reads RSE. Glu-285 lines the L-serine pocket. 349 to 352 provides a ligand contact to ATP; the sequence is EISS. Ser-385 serves as a coordination point for L-serine.

Belongs to the class-II aminoacyl-tRNA synthetase family. Type-1 seryl-tRNA synthetase subfamily. Homodimer. The tRNA molecule binds across the dimer.

It localises to the cytoplasm. The catalysed reaction is tRNA(Ser) + L-serine + ATP = L-seryl-tRNA(Ser) + AMP + diphosphate + H(+). The enzyme catalyses tRNA(Sec) + L-serine + ATP = L-seryl-tRNA(Sec) + AMP + diphosphate + H(+). It participates in aminoacyl-tRNA biosynthesis; selenocysteinyl-tRNA(Sec) biosynthesis; L-seryl-tRNA(Sec) from L-serine and tRNA(Sec): step 1/1. In terms of biological role, catalyzes the attachment of serine to tRNA(Ser). Is also able to aminoacylate tRNA(Sec) with serine, to form the misacylated tRNA L-seryl-tRNA(Sec), which will be further converted into selenocysteinyl-tRNA(Sec). This chain is Serine--tRNA ligase, found in Roseobacter denitrificans (strain ATCC 33942 / OCh 114) (Erythrobacter sp. (strain OCh 114)).